Here is a 645-residue protein sequence, read N- to C-terminus: Chaperone protein DnaK (645 aa).

Position 201 is a phosphothreonine; by autocatalysis (Thr201). Residues 606-629 show a composition bias toward low complexity; that stretch reads NTNNATAGDNNTTDTGSSSNSDGS. Positions 606-645 are disordered; sequence NTNNATAGDNNTTDTGSSSNSDGSKVVDSDYQEIDKKDGK. Basic and acidic residues predominate over residues 630-645; sequence KVVDSDYQEIDKKDGK.

The protein belongs to the heat shock protein 70 family.

Acts as a chaperone. The polypeptide is Chaperone protein DnaK (Ehrlichia ruminantium (strain Gardel)).